The chain runs to 413 residues: MKPRVLGMILAGGQGSRLAPLTLKRSKPAVPFGGKYRIIDFAINNFINSGVFSIYVLTQYKAQSLTEHIQRGWRFGTFLQDYFITLVPAQMYRYEELGAVWYRGTADAVYQNLHLIDNFNADYVAIFSGDHIYKMNVEHMLQAHMDARADVTIAAYPMPRTRAHQFGVMQVDDRWRVTEFLEKPQDPPGLPGDPDTSLTSMGNYIFSRRALEELLHTSISGEGEGFDFGHNVLPRALADGYHVQAYDFHRNPIPGQSSPNLYWRDVGTLDAYFEASMDLVSVNPEFDIYNPQWPLRTSSEFSPPAKFVHEAEGRKGQAFNSLLAGGVIISGGTVRDSILSRNVRTHSYSLVESCVLFDNVEVGRHSHLRRVIVDKDVIIPPGTRIGLDHEEDRGRGFTVTNNGIVVVPKSYTF.

Alpha-D-glucose 1-phosphate contacts are provided by residues Y102, G167, 182 to 183, and S200; that span reads EK.

This sequence belongs to the bacterial/plant glucose-1-phosphate adenylyltransferase family. As to quaternary structure, homotetramer.

The catalysed reaction is alpha-D-glucose 1-phosphate + ATP + H(+) = ADP-alpha-D-glucose + diphosphate. Its pathway is glycan biosynthesis; glycogen biosynthesis. In terms of biological role, involved in the biosynthesis of ADP-glucose, a building block required for the elongation reactions to produce glycogen. Catalyzes the reaction between ATP and alpha-D-glucose 1-phosphate (G1P) to produce pyrophosphate and ADP-Glc. The chain is Glucose-1-phosphate adenylyltransferase from Deinococcus geothermalis (strain DSM 11300 / CIP 105573 / AG-3a).